A 560-amino-acid polypeptide reads, in one-letter code: DNA ligase B (560 aa).

Lysine 124 (N6-AMP-lysine intermediate) is an active-site residue.

It belongs to the NAD-dependent DNA ligase family. LigB subfamily.

The catalysed reaction is NAD(+) + (deoxyribonucleotide)n-3'-hydroxyl + 5'-phospho-(deoxyribonucleotide)m = (deoxyribonucleotide)n+m + AMP + beta-nicotinamide D-nucleotide.. In terms of biological role, catalyzes the formation of phosphodiester linkages between 5'-phosphoryl and 3'-hydroxyl groups in double-stranded DNA using NAD as a coenzyme and as the energy source for the reaction. The sequence is that of DNA ligase B from Citrobacter koseri (strain ATCC BAA-895 / CDC 4225-83 / SGSC4696).